Reading from the N-terminus, the 159-residue chain is Ribosomal RNA large subunit methyltransferase H (159 aa).

Residues leucine 76, glycine 108, and 127–132 (FSKMTF) each bind S-adenosyl-L-methionine.

The protein belongs to the RNA methyltransferase RlmH family. In terms of assembly, homodimer.

The protein resides in the cytoplasm. It catalyses the reaction pseudouridine(1915) in 23S rRNA + S-adenosyl-L-methionine = N(3)-methylpseudouridine(1915) in 23S rRNA + S-adenosyl-L-homocysteine + H(+). Its function is as follows. Specifically methylates the pseudouridine at position 1915 (m3Psi1915) in 23S rRNA. The polypeptide is Ribosomal RNA large subunit methyltransferase H (Bifidobacterium adolescentis (strain ATCC 15703 / DSM 20083 / NCTC 11814 / E194a)).